The primary structure comprises 160 residues: Protein-export protein SecB (160 aa).

Belongs to the SecB family. As to quaternary structure, homotetramer, a dimer of dimers. One homotetramer interacts with 1 SecA dimer.

The protein resides in the cytoplasm. In terms of biological role, one of the proteins required for the normal export of preproteins out of the cell cytoplasm. It is a molecular chaperone that binds to a subset of precursor proteins, maintaining them in a translocation-competent state. It also specifically binds to its receptor SecA. The polypeptide is Protein-export protein SecB (Beijerinckia indica subsp. indica (strain ATCC 9039 / DSM 1715 / NCIMB 8712)).